The sequence spans 1275 residues: Transient receptor potential protein (1275 aa).

At 1–366 (MGSNTESDAE…SEGAKFMRKP (366 aa)) the chain is on the cytoplasmic side. ANK repeat units follow at residues 69–98 (MNRS…EVGD) and 143–172 (VDIT…TLPM). Residues 367–387 (FVKFITHSCSYMFFLMLLGAA) form a helical membrane-spanning segment. Residues 388-418 (SLRVVQITFELLAFPWMLTMLEDWRKHERGS) are Extracellular-facing. A helical transmembrane segment spans residues 419-439 (LPGPIELAIITYIMALIFEEL). Residues 440 to 450 (KSLYSDGLFEY) are Cytoplasmic-facing. A helical membrane pass occupies residues 451-471 (IMDLWNIVDYISNMFYVTWIL). Residues 472–541 (CRATAWVIVH…LGPLQVSLGR (70 aa)) are Extracellular-facing. The helical transmembrane segment at 542-562 (MIIDIIKFFFIYTLVLFAFGC) threads the bilayer. The Cytoplasmic segment spans residues 563 to 609 (GLNQLLWYYAELEKNKCYHLHPDVADFDDQEKACTIWRRFSNLFETS). Residues 610-630 (QSLFWASFGLVDLVSFDLAGI) form a helical membrane-spanning segment. At 631–637 (KSFTRFW) the chain is on the extracellular side. Residues 638 to 658 (ALLMFGSYSVINIIVLLNMLI) form a helical membrane-spanning segment. Topologically, residues 659–1275 (AMMSNSYQII…VTGRMISGWL (617 aa)) are cytoplasmic. A disordered region spans residues 933–1275 (DEVSLADDEG…VTGRMISGWL (343 aa)). Composition is skewed to low complexity over residues 955–964 (ASGSKKSITS) and 972–982 (SMLAAAALRAS). Basic and acidic residues predominate over residues 1002-1022 (PTDDKKAGDDKDKQQPPKDSK). Over residues 1033-1049 (QKPTPGAGAPKPQAAGT) the composition is skewed to low complexity. Residues 1080–1098 (ESAKPEAAAKKEESSKTEA) are compositionally biased toward basic and acidic residues. Residues 1099-1118 (SKPAATNGAAKSAAPSAPSD) show a composition bias toward low complexity. Positions 1144–1239 (KPDEKKSGPE…KPADDKDKKP (96 aa)) are enriched in basic and acidic residues.

This sequence belongs to the transient receptor (TC 1.A.4) family. STrpC subfamily. As to quaternary structure, the C-terminus interacts with a PDZ domain of inaD to form the core of the inaD signaling complex. Other members of the complex include norpA (PLC), inaC (PKC), and possibly trpl, ninaC, Fkbp59, calmodulin and rhodopsin. Forms homomultimers and heteromultimers with trpl. Interaction with trpl is mediated in part by the N-terminal region and the transmembrane domains. Also interacts, though to a lower extent, with Trpgamma. Post-translationally, phosphorylated by inaC. Expressed predominantly in the rhabdomeres of photoreceptor cells. Expressed in the third antennal segment and in the olfactory segment at approximately 70 hours after puparium formation during antennal development.

It is found in the cell membrane. Its subcellular location is the cell projection. It localises to the rhabdomere membrane. Functionally, a light-sensitive calcium channel that is required for inositide-mediated Ca(2+) entry in the retina during phospholipase C (PLC)-mediated phototransduction. Ca(2+) influx may then feed back and inhibit PLC, thereby facilitating phosphatidylinositol 4,5 bisphosphate (PIP2) recycling. Trp and trpl act together in the light response, though it is unclear whether as heteromultimers or as distinct units, and are activated by fatty acids and metabolic stress. Also required for olfactory adaptation and may be involved in olfactory system development. The chain is Transient receptor potential protein (trp) from Drosophila melanogaster (Fruit fly).